A 21-amino-acid polypeptide reads, in one-letter code: Brevinin-2-related peptide (21 aa).

Leu-21 bears the Leucine amide mark.

In terms of tissue distribution, expressed by the skin glands.

The protein resides in the secreted. Its function is as follows. Antimicrobial peptide with activity against Gram-negative and Gram-positive bacteria (MIC=13 uM against E.coli, MIC=25 uM against S.aureus) and fungi (MIC=25 uM against C.albicans). Also shows hemolytic activity (HC(50)=50 uM). In vitro, shows moderate inhibitory activity against HIV. This chain is Brevinin-2-related peptide, found in Lithobates septentrionalis (Mink frog).